Reading from the N-terminus, the 473-residue chain is Cell division protein FtsZ homolog 2-2, chloroplastic (473 aa).

GTP-binding positions include 124-128 (GGGSN), 213-215 (GTG), E244, and R248. Phosphothreonine; by PGK1 is present on T282. D292 lines the GTP pocket. A disordered region spans residues 424–455 (EEGEGRPLQATQADASMGATRRPSSSFTEGSS). Residues 445-454 (RPSSSFTEGS) show a composition bias toward polar residues.

It belongs to the FtsZ family. Aggregates to form a contractile ring-like structure; contraction of the ring was accompanied by an increase in the filament turnover rate. Self-interacts and binds to FTSZ1 in heteropolymers to form two morphologically distinct types of filaments, termed type-I (smooth filaments) and -II (rough filaments), in a GTP-dependent manner. Part of a complex made of ARC3, ARC6, FTSZ1 and FTSZ2. Interacts (via C-terminus) with ARC6. Interacts with CDP1/PARC6. Binds to PGK1. In terms of processing, phosphorylation at Thr-282 is required for the formation of contractile ring at the chloroplast midpoint.

The protein resides in the plastid. It localises to the chloroplast stroma. Its subcellular location is the chloroplast thylakoid membrane. Exhibits GTPase activity. Component of the plastid division machinery that forms a contractile ring at the division site. Contributes to plastid division in the vegetative shoot apex, at the shoot apical meristem (SAM) where the proplastid-to-chloroplast transition takes place. This is Cell division protein FtsZ homolog 2-2, chloroplastic from Arabidopsis thaliana (Mouse-ear cress).